Reading from the N-terminus, the 374-residue chain is Flagellar P-ring protein (374 aa).

The N-terminal stretch at 1–29 (MRRVRTTRLFQVACAAIVALASSAMSAHA) is a signal peptide.

Belongs to the FlgI family. As to quaternary structure, the basal body constitutes a major portion of the flagellar organelle and consists of four rings (L,P,S, and M) mounted on a central rod.

It is found in the periplasm. Its subcellular location is the bacterial flagellum basal body. Functionally, assembles around the rod to form the L-ring and probably protects the motor/basal body from shearing forces during rotation. In Bradyrhizobium sp. (strain BTAi1 / ATCC BAA-1182), this protein is Flagellar P-ring protein.